The primary structure comprises 974 residues: MGWGAPLLSRMLHGPGQAGETSPVPERQSGSENPASEDRRPLEKQCSHHLYTMGQNCQRGQAVDVEPKIRPPLTEEKIDKYLYAMRLSDEILIDILTRFKKEMKNGLSRDYNPTASVKMLPTFVRSIPDGSEKGDFIALDLGGSSFRILRVQVNHEKSQNVSMESEVYDTPENIVHGSGSQLFDHVAECLGDFMEKRKIKDKKLPVGFTFSFPCRQSKIDEAVLITWTKRFKASGVEGADVVKLLNKAIKKRGDYDANIVAVVNDTVGTMMTCGYDDQQCEVGLIIGTGTNACYMEELRHIDLVEGDEGRMCINTEWGAFGDDGSLEDIRTEFDRELDRGSLNPGKQLFEKMVSGMYMGELVRLILVKMAKESLLFEGRITPELLTRGKFTTSDVAAIETDKEGVQNAKEILTRLGVEPSHDDCVSVQHVCTIVSFRSANLVAATLGAILNRLRDNKGTPRLRTTVGVDGSLYKMHPQYSRRFHKTLRRLVPDSDVRFLLSESGSGKGAAMVTAVAYRLAEQHRQIEETLSHFRLSKQALMEVKKKLRSEMEMGLRKETNSRATVKMLPSYVRSIPDGTEHGDFLALDLGGTNFRVLLVKIRSGKKRTVEMHNKIYSIPLEIMQGTGDELFDHIVSCISDFLDYMGIKGPRMPLGFTFSFPCKQTSLDCGILITWTKGFKATDCVGHDVATLLRDAVKRREEFDLDVVAVVNDTVGTMMTCAYEEPSCEIGLIVGTGSNACYMEEMKNVEMVEGNQGQMCINMEWGAFGDNGCLDDIRTDFDKVVDEYSLNSGKQRFEKMISGMYLGEIVRNILIDFTKKGFLFRGQISEPLKTRGIFETKFLSQIESDRLALLQVRAILQQLGLNSTCDDSILVKTVCGVVSKRAAQLCGAGMAAVVEKIRENRGLDHLNVTVGVDGTLYKLHPHFSRIMHQTVKELSPKCTVSFLLSEDGSGKGAALITAVGVRLRGDPTNA.

The disordered stretch occupies residues 1–42 (MGWGAPLLSRMLHGPGQAGETSPVPERQSGSENPASEDRRPL). Positions 57 to 66 (CQRGQAVDVE) are mitochondrial-binding peptide (MBP). Hexokinase domains follow at residues 72–514 (PLTE…MVTA) and 520–962 (AEQH…LITA). Residues R86 and 140–145 (DLGGSS) each bind ATP. The tract at residues 129–263 (DGSEKGDFIA…DYDANIVAVV (135 aa)) is hexokinase small subdomain 1. 140–147 (DLGGSSFR) provides a ligand contact to D-glucose 6-phosphate. D-glucose-binding positions include S211, 228–229 (TK), and 264–265 (ND). Positions 264–503 (NDTVGTMMTC…SDVRFLLSES (240 aa)) are hexokinase large subdomain 1. D-glucose 6-phosphate-binding residues include D265 and T288. Residues N291, E316, and 347-350 (QLFE) each bind D-glucose. Position 393 is a phosphoserine (S393). D-glucose 6-phosphate is bound at residue 469 to 471 (DGS). An ATP-binding site is contributed by 481 to 482 (RR). Residues S505 and 588-592 (DLGGT) each bind D-glucose 6-phosphate. Residues 577 to 711 (DGTEHGDFLA…EFDLDVVAVV (135 aa)) form a hexokinase small subdomain 2 region. Position 588–593 (588–593 (DLGGTN)) interacts with ATP. Residues 659 to 660 (SF), 676 to 677 (TK), and 712 to 713 (ND) each bind D-glucose. A hexokinase large subdomain 2 region spans residues 712-951 (NDTVGTMMTC…CTVSFLLSED (240 aa)). The D-glucose 6-phosphate site is built by D713 and T736. T736 contributes to the ATP binding site. D-glucose contacts are provided by residues 738-739 (SN), E764, and E798. ATP contacts are provided by residues 803 to 804 (GM), 840 to 844 (TKFLS), and 919 to 923 (TLYKL). D-glucose 6-phosphate is bound by residues 917 to 919 (DGT) and S953.

Belongs to the hexokinase family. Monomer. Interacts with RABL2/RABL2A; binds preferentially to GTP-bound RABL2. Interacts with VDAC1. The HK1-VDAC1 complex interacts with ATF2. Interacts (via N-terminal spermatogenic cell-specific region) with PFKM isoform 2 and isoform 3 (via C-terminus). Interacts with SMAD5. Tyrosine-phosphorylated. In terms of tissue distribution, in rapidly growing tumor cells exhibiting high glucose catabolic rates, isoform HK1 is markedly elevated. Isoform HK1-SA, isoform HK1-SB and isoform HK1-SC are found only in spermatogenic cells. Isoform HK1-SC is detected in round spermatids, condensing spermatids and mature sperm where it is found in the head membranes, mitochondria of the midpiece and the fibrous sheath of the flagellum. Expressed within the principal piece and midpiece of sperm tail (at protein level).

Its subcellular location is the mitochondrion outer membrane. It localises to the cytoplasm. The protein resides in the cytosol. It is found in the membrane. It catalyses the reaction a D-hexose + ATP = a D-hexose 6-phosphate + ADP + H(+). It carries out the reaction D-fructose + ATP = D-fructose 6-phosphate + ADP + H(+). The catalysed reaction is D-glucose + ATP = D-glucose 6-phosphate + ADP + H(+). The enzyme catalyses D-mannose + ATP = D-mannose 6-phosphate + ADP + H(+). It catalyses the reaction D-glucosamine + ATP = D-glucosamine 6-phosphate + ADP + H(+). Its pathway is carbohydrate metabolism; hexose metabolism. It participates in carbohydrate degradation; glycolysis; D-glyceraldehyde 3-phosphate and glycerone phosphate from D-glucose: step 1/4. Its activity is regulated as follows. Hexokinase is an allosteric enzyme inhibited by its product D-glucose 6-phosphate. Hexokinase activity is inhibited by N-acetyl-D-glucosamine. Catalyzes the phosphorylation of various hexoses, such as D-glucose, D-glucosamine, D-fructose, D-mannose and 2-deoxy-D-glucose, to hexose 6-phosphate (D-glucose 6-phosphate, D-glucosamine 6-phosphate, D-fructose 6-phosphate, D-mannose 6-phosphate and 2-deoxy-D-glucose 6-phosphate, respectively). Does not phosphorylate N-acetyl-D-glucosamine. Mediates the initial step of glycolysis by catalyzing phosphorylation of D-glucose to D-glucose 6-phosphate. Involved in innate immunity and inflammation by acting as a pattern recognition receptor for bacterial peptidoglycan. When released in the cytosol, N-acetyl-D-glucosamine component of bacterial peptidoglycan inhibits the hexokinase activity of HK1 and causes its dissociation from mitochondrial outer membrane, thereby activating the NLRP3 inflammasome. The polypeptide is Hexokinase-1 (Mus musculus (Mouse)).